Here is a 235-residue protein sequence, read N- to C-terminus: 15,16-dihydrobiliverdin:ferredoxin oxidoreductase (235 aa).

Belongs to the HY2 family.

The catalysed reaction is 15,16-dihydrobiliverdin + oxidized 2[4Fe-4S]-[ferredoxin] = biliverdin IXalpha + reduced 2[4Fe-4S]-[ferredoxin] + 2 H(+). Functionally, catalyzes the two-electron reduction of biliverdin IX-alpha at the C15 methine bridge. This is 15,16-dihydrobiliverdin:ferredoxin oxidoreductase (pebA) from Parasynechococcus marenigrum (strain WH8102).